We begin with the raw amino-acid sequence, 106 residues long: Large ribosomal subunit protein uL24 (106 aa).

The protein belongs to the universal ribosomal protein uL24 family. In terms of assembly, part of the 50S ribosomal subunit.

One of two assembly initiator proteins, it binds directly to the 5'-end of the 23S rRNA, where it nucleates assembly of the 50S subunit. Its function is as follows. One of the proteins that surrounds the polypeptide exit tunnel on the outside of the subunit. In Clostridium tetani (strain Massachusetts / E88), this protein is Large ribosomal subunit protein uL24.